Consider the following 350-residue polypeptide: TLC domain-containing protein fld-1 (350 aa).

The chain crosses the membrane as a helical span at residues 9–29; that stretch reads TDLLGPVPTMFLWVIVSFAFF. The segment at 65–100 is disordered; it reads GQEAENTENPPENEAEAGEQVEQEPEPDSRDLSAIP. The span at 75 to 90 shows a compositional bias: acidic residues; it reads PENEAEAGEQVEQEPE. Residues 102 to 279 form the TLC domain; the sequence is NKKWRISNEC…IINGLVIASL (178 aa). The next 6 helical transmembrane spans lie at 111-131, 145-165, 173-193, 195-215, 229-249, and 270-292; these read CVSL…LLYY, VAIN…VDLL, IIEL…TMFF, RFLG…FLHS, PSFR…RLCV, and IING…RLLA.

Ubiquitously expressed.

It is found in the cell membrane. In terms of biological role, regulates the composition and fluidity of the plasma membrane. Inhibits the incorporation of membrane-fluidizing phospholipids containing omega-3 long-chain polyunsaturated fatty acids (LCPUFA) and thereby promotes membrane rigidity. Does not appear to have any effect on LCPUFA synthesis. The chain is TLC domain-containing protein fld-1 from Caenorhabditis elegans.